The chain runs to 260 residues: 2-amino-5-formylamino-6-ribosylaminopyrimidin-4(3H)-one 5'-monophosphate deformylase (260 aa).

Fe cation is bound by residues E33, H35, D44, and H112.

It belongs to the creatininase superfamily. FAPy deformylase family. In terms of assembly, homodimer. The cofactor is Fe(2+). Requires Zn(2+) as cofactor.

The catalysed reaction is 2-amino-5-formylamino-6-(5-phospho-D-ribosylamino)pyrimidin-4(3H)-one + H2O = 2,5-diamino-6-(1-D-ribosylamino)pyrimidin-4(3H)-one 5'-phosphate + formate + H(+). It functions in the pathway cofactor biosynthesis; coenzyme F420 biosynthesis. It participates in cofactor biosynthesis; riboflavin biosynthesis. Functionally, catalyzes the hydrolysis of the formamide of 2-amino-5-formylamino-6-ribosylamino-4(3H)-pyrimidinone 5'-monophosphate (FAPy) to form 2,5-diamino-6-ribosylamino-4(3H)-pyrimidinone 5'-phosphate (APy). This Methanococcus voltae (strain ATCC BAA-1334 / A3) protein is 2-amino-5-formylamino-6-ribosylaminopyrimidin-4(3H)-one 5'-monophosphate deformylase.